Reading from the N-terminus, the 295-residue chain is Putative aquaporin-12A (295 aa).

The chain crosses the membrane as a helical span at residues 1–21 (MAGLNVSLSFFFATFALCEAA). Over 22-54 (RRASKALLPVGAYEVFAREAMRTLVELGPWAGD) the chain is Extracellular. The chain crosses the membrane as a helical span at residues 55-75 (FGPDLLLTLLFLLFLAHGVTL). Residues 76 to 99 (DGASANPTVSLQEFLMAEQSLPGT) lie on the Cytoplasmic side of the membrane. An intramembrane region (discontinuously helical) is located at residues 77-114 (GASANPTVSLQEFLMAEQSLPGTLLKLAAQGLGMQAAC). The NPA 1 motif lies at 81–83 (NPT). A helical membrane pass occupies residues 100–126 (LLKLAAQGLGMQAACTLMRLCWAWELS). Residues 127-145 (DLHLLQSLMAQSCSSALRT) are Extracellular-facing. The chain crosses the membrane as a helical span at residues 146–166 (SVPHGALVEAACAFCFHLTLL). Over 167-178 (HLRHSPPAYSGP) the chain is Cytoplasmic. The helical transmembrane segment at 179-199 (AVALLVTVTAYTAGPFTSAFF) threads the bilayer. The segment at residues 195 to 206 (TSAFFNPALAAS) is an intramembrane region (discontinuously helical). Residues 200–202 (NPA) carry the NPA 2 motif. Residues 200 to 215 (NPALAASVTFACSGHT) are Extracellular-facing. A helical transmembrane segment spans residues 216–236 (LLEYVQVYWLGPLTGMVLAVL). At 237 to 295 (LHQGRLPHLFQRNLFYGQKNKYRAPRGKPAPASGDTQTPAKGSSVREPGRSGVEGPHSS) the chain is on the cytoplasmic side. The segment at 257–295 (KYRAPRGKPAPASGDTQTPAKGSSVREPGRSGVEGPHSS) is disordered.

Belongs to the MIP/aquaporin (TC 1.A.8) family. AQP11/AQP12 subfamily. Homotetramer; each monomer provides an independent water pore. Restricted to the pancreas.

The protein resides in the membrane. It catalyses the reaction H2O(in) = H2O(out). Putative aquaporin. Could form homotetrameric transmembrane channels, with each monomer independently mediating water transport across the plasma membrane along its osmotic gradient. This is Putative aquaporin-12A from Homo sapiens (Human).